We begin with the raw amino-acid sequence, 448 residues long: Serine/threonine-protein phosphatase 2A regulatory subunit B'' subunit gamma (448 aa).

EF-hand domains follow at residues 268 to 303 (PSALRVYGQYLNLDKDHNGMLSKEELSRYGTGTLTC) and 336 to 371 (KEPAALQYIFKLLDIENKGSLNVFSLNFFFRAIQEQ). Ca(2+) contacts are provided by Asp281, Asp283, Asn285, Met287, and Glu292.

It is found in the nucleus. The protein localises to the cytoplasm. In terms of biological role, possible role in the regulation of cell death. The polypeptide is Serine/threonine-protein phosphatase 2A regulatory subunit B'' subunit gamma (ppp2r3c) (Xenopus tropicalis (Western clawed frog)).